The primary structure comprises 90 residues: Probable Fe(2+)-trafficking protein (90 aa).

It belongs to the Fe(2+)-trafficking protein family.

Functionally, could be a mediator in iron transactions between iron acquisition and iron-requiring processes, such as synthesis and/or repair of Fe-S clusters in biosynthetic enzymes. The protein is Probable Fe(2+)-trafficking protein of Bordetella avium (strain 197N).